We begin with the raw amino-acid sequence, 385 residues long: MKDSFLFTSESVTEGHPDKMADQISDAVLDYIIERDQKAKVACETLVSNGFCMITGELKTSVYAPMQEIAREVVKKIGYTDALYGFDYRSAAVLNGVGEQSPDINQGVDREDGEIGAGDQGLMFGYACKETETLMPLPIHLAHQLTFALAQKRKDNTLPFLRPDGKSQVSVRYENNKPVSIDTIVISTQHSPEVSQKHLKEAVIEEIVYKVLPKEYLHDNIKFFVNPTGKFVIGGPQGDAGLTGRKIIVDTYGGSCPHGGGAFSGKDPSKVDRSAAYAARYVAKNLVASGVCDKATVQLAYAIGVIEPVSVYVNTHNTSKYSSAELEKCVKAVFKLTPKGIIESLDLLRPIYSLTSAYGHFGRELEEFTWEKTNKAEEIKAFFKR.

Histidine 16 is an ATP binding site. A Mg(2+)-binding site is contributed by aspartate 18. Glutamate 44 is a K(+) binding site. Glutamate 57 and glutamine 100 together coordinate L-methionine. A flexible loop region spans residues 100 to 110 (QSPDINQGVDR). ATP-binding positions include 164 to 166 (DGK), 230 to 231 (KF), aspartate 239, 245 to 246 (RK), alanine 262, and lysine 266. Residue aspartate 239 participates in L-methionine binding. Lysine 270 contributes to the L-methionine binding site.

The protein belongs to the AdoMet synthase family. Homotetramer; dimer of dimers. Mg(2+) is required as a cofactor. It depends on K(+) as a cofactor.

The protein resides in the cytoplasm. It catalyses the reaction L-methionine + ATP + H2O = S-adenosyl-L-methionine + phosphate + diphosphate. It participates in amino-acid biosynthesis; S-adenosyl-L-methionine biosynthesis; S-adenosyl-L-methionine from L-methionine: step 1/1. Its function is as follows. Catalyzes the formation of S-adenosylmethionine (AdoMet) from methionine and ATP. The overall synthetic reaction is composed of two sequential steps, AdoMet formation and the subsequent tripolyphosphate hydrolysis which occurs prior to release of AdoMet from the enzyme. In Helicobacter pylori (strain G27), this protein is S-adenosylmethionine synthase.